Reading from the N-terminus, the 732-residue chain is Aldehyde oxidoreductase molybdenum-binding subunit PaoC (732 aa).

Mo-molybdopterin cytosine dinucleotide contacts are provided by residues 241 to 242, 468 to 470, 511 to 512, 615 to 621, Gln-625, and 688 to 691; these read GF, IGT, GA, RILNPKT, and KGVG. The Proton acceptor role is filled by Glu-692.

This sequence belongs to the xanthine dehydrogenase family. Heterotrimer composed of PaoA, PaoB and PaoC. The cofactor is Mo-molybdopterin cytosine dinucleotide.

It is found in the periplasm. The enzyme catalyses an aldehyde + A + H2O = a carboxylate + AH2 + H(+). Its activity is regulated as follows. The complex requires PaoD for activity. Oxidizes aldehydes to the corresponding carboxylic acids with a preference for aromatic aldehydes. It might play a role in the detoxification of aldehydes to avoid cell damage. The sequence is that of Aldehyde oxidoreductase molybdenum-binding subunit PaoC from Escherichia coli (strain K12).